A 422-amino-acid chain; its full sequence is La-related protein 6A (422 aa).

The interval 1–94 (MSSLPLRSGE…DHGENPVETD (94 aa)) is disordered. Over residues 48–61 (VTESSDDVVVNVSE) the composition is skewed to low complexity. Residues 73 to 89 (DHERNSGEDRDQDHGEN) are compositionally biased toward basic and acidic residues. The 92-residue stretch at 97 to 188 (VVPIDELNQK…KRLSPLPEIR (92 aa)) folds into the HTH La-type RNA-binding domain. The RRM domain occupies 193 to 283 (FTVLVENLPE…NGLRVKLLEQ (91 aa)). A disordered region spans residues 286–422 (GKFAQRRPAR…PTSTQTSHEV (137 aa)). Positions 295–348 (RREVDKEKDTTGRVHDQTGGEKNKKTREHQNHRLHHSDNPADDDGGNHQKDKNG) are enriched in basic and acidic residues.

The protein localises to the nucleus. Functionally, transcriptional regulator. This chain is La-related protein 6A (LARP6A), found in Arabidopsis thaliana (Mouse-ear cress).